Consider the following 274-residue polypeptide: F-actin-capping protein subunit alpha (274 aa).

This sequence belongs to the F-actin-capping protein alpha subunit family. Heterodimer of an alpha and a beta subunit.

The protein resides in the cytoplasm. F-actin-capping proteins bind in a Ca(2+)-independent manner to the fast growing ends of actin filaments (barbed end) thereby blocking the exchange of subunits at these ends. Unlike other capping proteins (such as gelsolin and severin), these proteins do not sever actin filaments. This Chaetomium thermophilum (strain DSM 1495 / CBS 144.50 / IMI 039719) (Thermochaetoides thermophila) protein is F-actin-capping protein subunit alpha.